We begin with the raw amino-acid sequence, 1647 residues long: MAP kinase-activating death domain protein (1647 aa).

Residues 14–268 (YLVIVGARHP…VPVSGQKRVD (255 aa)) enclose the uDENN domain. Over residues 108–122 (EKGEGGAGSRGKEGT) the composition is skewed to basic and acidic residues. The segment at 108-168 (EKGEGGAGSR…GKRRAKAGSR (61 aa)) is disordered. The segment covering 128 to 141 (SEEGGTESSESGSS) has biased composition (low complexity). Residues 142–157 (LQPLSADSTPDVNQSP) are compositionally biased toward polar residues. Serine 156 bears the Phosphoserine mark. Residues 158–167 (RGKRRAKAGS) are compositionally biased toward basic residues. Residues 289-429 (RFTLVDFPLH…ESLELKKHLK (141 aa)) form the cDENN domain. The dDENN domain occupies 431 to 565 (ALASMSLNTQ…LNPTNYAFQR (135 aa)). 2 disordered regions span residues 604-636 (ALSVPPERDSDSEPTDDSGSDSMDYDDSSSSYS) and 678-842 (NQKE…STEG). The segment covering 615–630 (SEPTDDSGSDSMDYDD) has biased composition (acidic residues). A phosphoserine mark is found at serine 689 and serine 692. Residues 689–699 (SENSQENPPLR) show a composition bias toward polar residues. Over residues 700 to 712 (SSSSTTASSSPST) the composition is skewed to low complexity. A compositionally biased stretch (basic and acidic residues) spans 750 to 768 (NVDRRQAEIGEGSVRRRIY). Residues 790 to 804 (ESYTPRFSQHVSGNR) are compositionally biased toward polar residues. Phosphoserine is present on residues serine 813, serine 818, and serine 820. Low complexity predominate over residues 827 to 840 (RASSPNSTVSNTST). Phosphoserine is present on residues serine 858, serine 862, serine 916, serine 921, and serine 930. Disordered regions lie at residues 913–941 (QKSSVIKHSPTVKREPPSPQGRSSNSSEN), 1051–1110 (KEPD…DTRS), and 1146–1243 (VFDL…DSEI). A compositionally biased stretch (polar residues) spans 932 to 941 (QGRSSNSSEN). Residue serine 1059 is modified to Phosphoserine. Phosphothreonine occurs at positions 1061 and 1066. Serine 1110 bears the Phosphoserine mark. Polar residues-rich tracts occupy residues 1158–1173 (QISADSGVSLTSSSQR), 1189–1207 (RSSSQDSEVSTVVSNSSGE), and 1234–1243 (SRGTLSDSEI). Threonine 1237 is subject to Phosphothreonine. Residues serine 1239 and serine 1270 each carry the phosphoserine modification. Residues 1340–1415 (GMDQGPQEMI…GLVYSQQINE (76 aa)) form the Death domain.

It belongs to the MADD family. In terms of assembly, interacts (via death domain) with TNFRSF1A (via death domain). Interacts with PIDD1. Interacts with YWHAZ. Interacts (via death domain) with KIF1B; links the motor KIF1B to Rab3-carrying vesicles in anterograde synaptic vesicle transport. Interacts with KIF1A. Interacts (via uDENN domain) with RAB3A, RAB3B, RAB3C and RAB3D; the GTP-bound form of the Rab proteins is preferred for interaction. In terms of tissue distribution, expressed in testis, ovary, brain and heart. Expressed in spleen, thymus, prostate, testis, ovary, small instestine and colon. Expressed in liver. As to expression, not detected in the brain, breast, kidney, lung, ovary, pancreas, testis, uterus, stomach and thyroid. Expressed in the brain, breast, kidney, lung, ovary, pancreas, testis, uterus, stomach and thyroid.

The protein resides in the cell membrane. It is found in the cytoplasm. The protein localises to the cell projection. Its subcellular location is the axon. Functionally, guanyl-nucleotide exchange factor that regulates small GTPases of the Rab family. Converts GDP-bound inactive form of RAB27A and RAB27B to the GTP-bound active forms. Converts GDP-bound inactive form of RAB3A, RAB3C and RAB3D to the GTP-bound active forms, GTPases involved in synaptic vesicle exocytosis and vesicle secretion. Plays a role in synaptic vesicle formation and in vesicle trafficking at the neuromuscular junction. Involved in up-regulating a post-docking step of synaptic exocytosis in central synapses. Probably by binding to the motor proteins KIF1B and KIF1A, mediates motor-dependent transport of GTP-RAB3A-positive vesicles to the presynaptic nerve terminals. Plays a role in TNFA-mediated activation of the MAPK pathway, including ERK1/2. May link TNFRSF1A with MAP kinase activation. May be involved in the regulation of TNFA-induced apoptosis. The chain is MAP kinase-activating death domain protein from Homo sapiens (Human).